We begin with the raw amino-acid sequence, 365 residues long: DNA replication and repair protein RecF (365 aa).

Position 30–37 (30–37) interacts with ATP; that stretch reads GRNAQGKT.

The protein belongs to the RecF family.

The protein resides in the cytoplasm. The RecF protein is involved in DNA metabolism; it is required for DNA replication and normal SOS inducibility. RecF binds preferentially to single-stranded, linear DNA. It also seems to bind ATP. The chain is DNA replication and repair protein RecF from Streptococcus pneumoniae serotype 4 (strain ATCC BAA-334 / TIGR4).